The sequence spans 1076 residues: Atos homolog protein A (1076 aa).

A transactivation domain 1 (TAD1) region spans residues 24–32 (ALLITEGRT). 2 disordered regions span residues 700–721 (ESMSSNKDSKRPKTCEQNTQLN) and 739–765 (SDQLKNEQDKQEDPTNEKSQNYSQRRS). The segment covering 739–754 (SDQLKNEQDKQEDPTN) has biased composition (basic and acidic residues). A required for macropage invasion region spans residues 878-935 (LLGNFEESVLNYRFDPLGIVDGFTAEVGASGAFCPTHLTLPVEVSFYSVSDDNAPSPY). The tract at residues 962-970 (FNPNKTVVK) is transactivation domain 2 (TAD2).

The protein belongs to the ATOS family.

The protein resides in the nucleus. Its function is as follows. Transcription regulator that syncronizes transcriptional and translational programs to promote macrophage invasion of tissues. The protein is Atos homolog protein A of Homo sapiens (Human).